The primary structure comprises 72 residues: Translation initiation factor IF-1 (72 aa).

The S1-like domain maps to 1–72 (MAKDNVIEIE…SKGRITYRFK (72 aa)).

It belongs to the IF-1 family. In terms of assembly, component of the 30S ribosomal translation pre-initiation complex which assembles on the 30S ribosome in the order IF-2 and IF-3, IF-1 and N-formylmethionyl-tRNA(fMet); mRNA recruitment can occur at any time during PIC assembly.

It localises to the cytoplasm. In terms of biological role, one of the essential components for the initiation of protein synthesis. Stabilizes the binding of IF-2 and IF-3 on the 30S subunit to which N-formylmethionyl-tRNA(fMet) subsequently binds. Helps modulate mRNA selection, yielding the 30S pre-initiation complex (PIC). Upon addition of the 50S ribosomal subunit IF-1, IF-2 and IF-3 are released leaving the mature 70S translation initiation complex. This Pediococcus pentosaceus (strain ATCC 25745 / CCUG 21536 / LMG 10740 / 183-1w) protein is Translation initiation factor IF-1.